We begin with the raw amino-acid sequence, 146 residues long: Hemoglobin subunit beta (146 aa).

One can recognise a Globin domain in the interval 2–146; it reads HWTAEEKQLI…VAHALARKYH (145 aa). Residues His63 and His92 each contribute to the heme b site.

The protein belongs to the globin family. In terms of assembly, heterotetramer of two alpha chains and two beta chains. As to expression, red blood cells.

In terms of biological role, involved in oxygen transport from the lung to the various peripheral tissues. In Anas platyrhynchos platyrhynchos (Northern mallard), this protein is Hemoglobin subunit beta (HBB).